Here is a 41-residue protein sequence, read N- to C-terminus: Cytochrome b559 subunit beta (41 aa).

The chain crosses the membrane as a helical span at residues 16 to 32 (WLAIHALAVPTVFFLGS). Histidine 20 contacts heme.

The protein belongs to the PsbE/PsbF family. As to quaternary structure, heterodimer of an alpha subunit and a beta subunit. PSII is composed of 1 copy each of membrane proteins PsbA, PsbB, PsbC, PsbD, PsbE, PsbF, PsbH, PsbI, PsbJ, PsbK, PsbL, PsbM, PsbT, PsbX, PsbY, PsbZ, Psb30/Ycf12, at least 3 peripheral proteins of the oxygen-evolving complex and a large number of cofactors. It forms dimeric complexes. Heme b serves as cofactor.

It is found in the plastid. It localises to the chloroplast thylakoid membrane. Functionally, this b-type cytochrome is tightly associated with the reaction center of photosystem II (PSII). PSII is a light-driven water:plastoquinone oxidoreductase that uses light energy to abstract electrons from H(2)O, generating O(2) and a proton gradient subsequently used for ATP formation. It consists of a core antenna complex that captures photons, and an electron transfer chain that converts photonic excitation into a charge separation. In Oltmannsiellopsis viridis (Marine flagellate), this protein is Cytochrome b559 subunit beta.